The primary structure comprises 229 residues: Matrix protein (229 aa).

A dynamin binding motif is present at residues 2–4; it reads KSI. The interval 11 to 36 is disordered; the sequence is AKKEKKREKKSNHGSHSMEWESPPSY. The segment covering 13-23 has biased composition (basic residues); it reads KEKKREKKSNH. Positions 33-36 match the PPXY motif motif; that stretch reads PPSY. Positions 42 to 45 match the PTAP/PSAP motif motif; that stretch reads PSAP.

Belongs to the vesiculoviruses matrix protein family. Homomultimer. Interacts with viral nucleocapsid; this interaction contributes to the virion assembly. Interacts with the viral envelope glycoprotein; this interaction contributes to the virion assembly. Interacts with host RAE1-NUP98 complex. Interacts with host NEDD4 and TSG101. Interacts with host dynamin. Interacts with host NDUFAF4; the interaction inhibits viral propagation and is independent of interferon activation. Interacts with host GTF2H5; the interaction may inhibit host transcription. In terms of processing, phosphorylated by host.

It is found in the virion. The protein localises to the host endomembrane system. The protein resides in the host nucleus membrane. Its subcellular location is the host nucleus. It localises to the host cytoplasm. In terms of biological role, forms a double layer around the helical nucleocapsid, the inner matrix layer binding to the N helix and the outer matrix layer binding to the envelope glycoprotein. Plays a major role in assembly and budding of virion, by recruiting cellular partners of the ESCRT complexes that play a key role in releasing the budding particle from the host membrane. Condensates the ribonucleocapsid core during virus assembly. Inhibits the host mRNA nuclear export thereby inducing the shut off of cellular transcription and preventing the interferon signaling and the establishment of antiviral state in infected cells. This shutoff presumably inhibits interferon signaling and thus establishment of antiviral state in virus infected cells. Induces cell-rounding, cytoskeleton disorganization and apoptosis in infected cell. Inhibits host transcription, possibly through interaction with host DNA repair factor IIH/TFIIH GTF2H5 subunit. The polypeptide is Matrix protein (M) (Piry virus (PIRYV)).